The primary structure comprises 336 residues: UDP-3-O-acylglucosamine N-acyltransferase (336 aa).

Residue H233 is the Proton acceptor of the active site.

The protein belongs to the transferase hexapeptide repeat family. LpxD subfamily. In terms of assembly, homotrimer.

It catalyses the reaction a UDP-3-O-[(3R)-3-hydroxyacyl]-alpha-D-glucosamine + a (3R)-hydroxyacyl-[ACP] = a UDP-2-N,3-O-bis[(3R)-3-hydroxyacyl]-alpha-D-glucosamine + holo-[ACP] + H(+). Its pathway is bacterial outer membrane biogenesis; LPS lipid A biosynthesis. Functionally, catalyzes the N-acylation of UDP-3-O-acylglucosamine using 3-hydroxyacyl-ACP as the acyl donor. Is involved in the biosynthesis of lipid A, a phosphorylated glycolipid that anchors the lipopolysaccharide to the outer membrane of the cell. In Helicobacter pylori (strain ATCC 700392 / 26695) (Campylobacter pylori), this protein is UDP-3-O-acylglucosamine N-acyltransferase.